Consider the following 157-residue polypeptide: SsrA-binding protein (157 aa).

The protein belongs to the SmpB family.

It is found in the cytoplasm. Its function is as follows. Required for rescue of stalled ribosomes mediated by trans-translation. Binds to transfer-messenger RNA (tmRNA), required for stable association of tmRNA with ribosomes. tmRNA and SmpB together mimic tRNA shape, replacing the anticodon stem-loop with SmpB. tmRNA is encoded by the ssrA gene; the 2 termini fold to resemble tRNA(Ala) and it encodes a 'tag peptide', a short internal open reading frame. During trans-translation Ala-aminoacylated tmRNA acts like a tRNA, entering the A-site of stalled ribosomes, displacing the stalled mRNA. The ribosome then switches to translate the ORF on the tmRNA; the nascent peptide is terminated with the 'tag peptide' encoded by the tmRNA and targeted for degradation. The ribosome is freed to recommence translation, which seems to be the essential function of trans-translation. In Limosilactobacillus reuteri (strain DSM 20016) (Lactobacillus reuteri), this protein is SsrA-binding protein.